The following is a 360-amino-acid chain: Phospho-N-acetylmuramoyl-pentapeptide-transferase (360 aa).

A run of 10 helical transmembrane segments spans residues 27 to 47, 70 to 90, 98 to 118, 134 to 154, 168 to 188, 199 to 219, 239 to 259, 263 to 283, 288 to 308, and 337 to 357; these read GALF…ISLL, GTPT…ILLW, VWVT…DDYL, LLLE…YSPA, TLLN…VGAG, GLAI…AYLV, LAVV…FNAP, IFMG…IAVA, IVLA…IIQV, and QVVI…LATL.

Belongs to the glycosyltransferase 4 family. MraY subfamily. Mg(2+) is required as a cofactor.

The protein resides in the cell inner membrane. The catalysed reaction is UDP-N-acetyl-alpha-D-muramoyl-L-alanyl-gamma-D-glutamyl-meso-2,6-diaminopimeloyl-D-alanyl-D-alanine + di-trans,octa-cis-undecaprenyl phosphate = di-trans,octa-cis-undecaprenyl diphospho-N-acetyl-alpha-D-muramoyl-L-alanyl-D-glutamyl-meso-2,6-diaminopimeloyl-D-alanyl-D-alanine + UMP. Its pathway is cell wall biogenesis; peptidoglycan biosynthesis. In terms of biological role, catalyzes the initial step of the lipid cycle reactions in the biosynthesis of the cell wall peptidoglycan: transfers peptidoglycan precursor phospho-MurNAc-pentapeptide from UDP-MurNAc-pentapeptide onto the lipid carrier undecaprenyl phosphate, yielding undecaprenyl-pyrophosphoryl-MurNAc-pentapeptide, known as lipid I. This chain is Phospho-N-acetylmuramoyl-pentapeptide-transferase, found in Methylorubrum extorquens (strain CM4 / NCIMB 13688) (Methylobacterium extorquens).